The sequence spans 124 residues: Small ribosomal subunit protein bS6 (124 aa).

A disordered region spans residues 97–124 (EQGPSAMMRRGDRDRSNRSDRRRDRDAA). The segment covering 105–124 (RRGDRDRSNRSDRRRDRDAA) has biased composition (basic and acidic residues).

It belongs to the bacterial ribosomal protein bS6 family.

In terms of biological role, binds together with bS18 to 16S ribosomal RNA. The chain is Small ribosomal subunit protein bS6 from Zymomonas mobilis subsp. mobilis (strain ATCC 31821 / ZM4 / CP4).